Here is a 414-residue protein sequence, read N- to C-terminus: Relaxin-3 receptor 2 (414 aa).

Topologically, residues 1 to 43 (MATSNSSASLPTLFWVNGSGDSVLSTDGAAMPVQFLVLRIMVA) are extracellular. 2 N-linked (GlcNAc...) asparagine glycosylation sites follow: N5 and N17. Residues 44-64 (LAYGLVGIIGLLGNLAVLWVL) traverse the membrane as a helical segment. The Cytoplasmic portion of the chain corresponds to 65-77 (GNCGQRVPGLSSD). The chain crosses the membrane as a helical span at residues 78 to 98 (TFVFSLALADLGLALTLPFWA). Residues 99–116 (TESAMDFHWPFGSALCKV) lie on the Extracellular side of the membrane. Cysteines 114 and 191 form a disulfide. The chain crosses the membrane as a helical span at residues 117–137 (VLTTTVLSIYASTFLITALSI). The Cytoplasmic portion of the chain corresponds to 138-155 (ARYWVVAMAVGPGSHLSV). A helical transmembrane segment spans residues 156–176 (FWARVVTLAVWVAAALVTVPT). Residues 177–209 (AIFGAEVELWGVCLCLLRFPSRYWLGAYQLQRV) lie on the Extracellular side of the membrane. The helical transmembrane segment at 210-230 (VLAFIVPLGVITTSYLLLLAF) threads the bilayer. Residues 231 to 255 (LERQQRCRPRQWQDSRVVARSVRVL) are Cytoplasmic-facing. The helical transmembrane segment at 256-276 (VASFALCWVPNHVVTLWEILV) threads the bilayer. The Extracellular portion of the chain corresponds to 277-293 (RFDLVPWDSTFYTFHTY). A helical transmembrane segment spans residues 294 to 316 (ILPITTCLAHSNSCLNPVIYCLL). At 317 to 414 (RREPQQVLVS…SQAAVSPGEV (98 aa)) the chain is on the cytoplasmic side.

Belongs to the G-protein coupled receptor 1 family. In terms of tissue distribution, detected only in bone marrow.

The protein localises to the cell membrane. Functionally, high affinity receptor for INSL5. Also acts as a receptor for RLN3/relaxin-3, as well as bradykinin and kallidin. Binding of the ligand inhibit cAMP accumulation. In Mus musculus (Mouse), this protein is Relaxin-3 receptor 2 (Rxfp4).